We begin with the raw amino-acid sequence, 182 residues long: Isopentenyl-diphosphate Delta-isomerase (182 aa).

Residues H25 and H32 each coordinate Mn(2+). Positions 30 to 164 (RLHLAFSSWL…PWAFSPWMVM (135 aa)) constitute a Nudix hydrolase domain. C67 is an active-site residue. Residue H69 participates in Mn(2+) binding. E87 provides a ligand contact to Mg(2+). Positions 114 and 116 each coordinate Mn(2+). Residue E116 is part of the active site.

Belongs to the IPP isomerase type 1 family. Homodimer. Requires Mg(2+) as cofactor. The cofactor is Mn(2+).

The protein localises to the cytoplasm. It catalyses the reaction isopentenyl diphosphate = dimethylallyl diphosphate. The protein operates within isoprenoid biosynthesis; dimethylallyl diphosphate biosynthesis; dimethylallyl diphosphate from isopentenyl diphosphate: step 1/1. Its function is as follows. Catalyzes the 1,3-allylic rearrangement of the homoallylic substrate isopentenyl (IPP) to its highly electrophilic allylic isomer, dimethylallyl diphosphate (DMAPP). The polypeptide is Isopentenyl-diphosphate Delta-isomerase (Escherichia coli O139:H28 (strain E24377A / ETEC)).